Reading from the N-terminus, the 248-residue chain is Small ribosomal subunit protein uS2 (248 aa).

It belongs to the universal ribosomal protein uS2 family.

This is Small ribosomal subunit protein uS2 from Alkalilimnicola ehrlichii (strain ATCC BAA-1101 / DSM 17681 / MLHE-1).